Reading from the N-terminus, the 277-residue chain is Ras suppressor protein 1 (277 aa).

The interval 1-23 (MSKSLKKLVEESREKNQPEVDMS) is disordered. S2 is modified (N-acetylserine). The span at 7–23 (KLVEESREKNQPEVDMS) shows a compositional bias: basic and acidic residues. LRR repeat units lie at residues 41-63 (HITQ…AELK), 64-85 (NLEV…ISSL), 87-109 (KLKH…GSLP), 110-133 (ALEV…FFYL), 135-156 (TLRA…IGKL), 158-179 (KLQI…IGEL), and 181-202 (QLKE…LGNL). Residues 250–277 (MQANPEPPKKNNDKSKKISRKPLAAKNK) form a disordered region. Residues 256–265 (PPKKNNDKSK) are compositionally biased toward basic and acidic residues.

Its function is as follows. Potentially plays a role in the Ras signal transduction pathway. Capable of suppressing v-Ras transformation in vitro. This Bos taurus (Bovine) protein is Ras suppressor protein 1 (RSU1).